We begin with the raw amino-acid sequence, 458 residues long: ATP synthase subunit beta (458 aa).

148-155 (GGAGVGKT) is an ATP binding site.

Belongs to the ATPase alpha/beta chains family. As to quaternary structure, F-type ATPases have 2 components, CF(1) - the catalytic core - and CF(0) - the membrane proton channel. CF(1) has five subunits: alpha(3), beta(3), gamma(1), delta(1), epsilon(1). CF(0) has three main subunits: a(1), b(2) and c(9-12). The alpha and beta chains form an alternating ring which encloses part of the gamma chain. CF(1) is attached to CF(0) by a central stalk formed by the gamma and epsilon chains, while a peripheral stalk is formed by the delta and b chains.

It localises to the cell inner membrane. It catalyses the reaction ATP + H2O + 4 H(+)(in) = ADP + phosphate + 5 H(+)(out). Produces ATP from ADP in the presence of a proton gradient across the membrane. The catalytic sites are hosted primarily by the beta subunits. This is ATP synthase subunit beta from Stutzerimonas stutzeri (strain A1501) (Pseudomonas stutzeri).